We begin with the raw amino-acid sequence, 397 residues long: Phosphoglycerate kinase (397 aa).

Substrate-binding positions include 21-23, Arg-36, 59-62, Arg-118, and Arg-151; these read DFN and HCGR. ATP-binding positions include Lys-201, Glu-323, and 353-356; that span reads GGDT.

The protein belongs to the phosphoglycerate kinase family. As to quaternary structure, monomer.

It is found in the cytoplasm. It catalyses the reaction (2R)-3-phosphoglycerate + ATP = (2R)-3-phospho-glyceroyl phosphate + ADP. It participates in carbohydrate degradation; glycolysis; pyruvate from D-glyceraldehyde 3-phosphate: step 2/5. This Bartonella quintana (strain Toulouse) (Rochalimaea quintana) protein is Phosphoglycerate kinase.